The following is a 378-amino-acid chain: Ribosomal RNA large subunit methyltransferase G (378 aa).

The protein belongs to the methyltransferase superfamily. RlmG family.

Its subcellular location is the cytoplasm. It carries out the reaction guanosine(1835) in 23S rRNA + S-adenosyl-L-methionine = N(2)-methylguanosine(1835) in 23S rRNA + S-adenosyl-L-homocysteine + H(+). Its function is as follows. Specifically methylates the guanine in position 1835 (m2G1835) of 23S rRNA. The chain is Ribosomal RNA large subunit methyltransferase G from Salmonella dublin (strain CT_02021853).